Reading from the N-terminus, the 275-residue chain is Provicilin (275 aa).

The span at 1-17 (DNAEIEKILLEEHEKET) shows a compositional bias: basic and acidic residues. Disordered stretches follow at residues 1–71 (DNAE…LKSS) and 134–164 (LVGQ…KNQV). Positions 50–63 (NAKSSSKKSVSSRS) are enriched in low complexity. The region spanning 66 to 238 (FNLKSSDPIY…TFPGSAQEVD (173 aa)) is the Cupin type-1 domain. Residues 147–157 (EEDDEEEEQRE) show a composition bias toward acidic residues.

The protein belongs to the 7S seed storage protein family.

The protein localises to the vacuole. It is found in the aleurone grain. Seed storage protein. This is Provicilin from Pisum sativum (Garden pea).